Here is a 181-residue protein sequence, read N- to C-terminus: Alkyl hydroperoxide reductase AhpD (181 aa).

The active-site Proton donor is cysteine 131. An intrachain disulfide couples cysteine 131 to cysteine 134. The active-site Cysteine sulfenic acid (-SOH) intermediate is the cysteine 134.

Belongs to the AhpD family.

The enzyme catalyses N(6)-[(R)-dihydrolipoyl]-L-lysyl-[lipoyl-carrier protein] + a hydroperoxide = N(6)-[(R)-lipoyl]-L-lysyl-[lipoyl-carrier protein] + an alcohol + H2O. Antioxidant protein with alkyl hydroperoxidase activity. Required for the reduction of the AhpC active site cysteine residues and for the regeneration of the AhpC enzyme activity. The sequence is that of Alkyl hydroperoxide reductase AhpD from Rhodopseudomonas palustris (strain BisA53).